The primary structure comprises 567 residues: Geranylgeranyl transferase type-2 subunit alpha (567 aa).

6 PFTA repeats span residues 44–78, 88–122, 124–158, 159–193, 207–241, and 363–397; these read LDES…QLET, LVKA…RLPE, NWTR…QAAV, PPAE…QLHP, VLLK…RADP, and VLQS…ALDP. The residue at position 98 (S98) is a Phosphoserine. LRR repeat units lie at residues 442–463, 464–486, 487–508, 509–530, and 534–555; these read EVRV…EQLL, LVTH…AALR, CLEV…TNLP, RLQE…QPLA, and RLVL…LEQL.

Belongs to the protein prenyltransferase subunit alpha family. Heterotrimer composed of RABGGTA, RABGGTB and CHM; within this trimer, RABGGTA and RABGGTB form the catalytic component B, while CHM (component A) mediates peptide substrate binding. The Rab GGTase dimer (RGGT) interacts with CHM (component A) prior to Rab protein binding; the association is stabilized by geranylgeranyl pyrophosphate (GGpp). The CHM:RGGT:Rab complex is destabilized by GGpp. Interacts with non-phosphorylated form of RAB8A; phosphorylation of RAB8A at 'Thr-72' disrupts this interaction.

It catalyses the reaction geranylgeranyl diphosphate + L-cysteinyl-[protein] = S-geranylgeranyl-L-cysteinyl-[protein] + diphosphate. With respect to regulation, the enzymatic reaction requires the aid of a Rab escort protein (also called component A), such as CHM. Catalyzes the transfer of a geranylgeranyl moiety from geranylgeranyl diphosphate to both cysteines of Rab proteins with the C-terminal sequence -XXCC, -XCXC and -CCXX, such as RAB1A, RAB3A, RAB5A and RAB7A. The sequence is that of Geranylgeranyl transferase type-2 subunit alpha (RABGGTA) from Pongo abelii (Sumatran orangutan).